The following is a 504-amino-acid chain: L-arabinose isomerase (504 aa).

4 residues coordinate Mn(2+): Glu-308, Glu-335, His-352, and His-452.

The protein belongs to the arabinose isomerase family. Requires Mn(2+) as cofactor.

It catalyses the reaction beta-L-arabinopyranose = L-ribulose. The protein operates within carbohydrate degradation; L-arabinose degradation via L-ribulose; D-xylulose 5-phosphate from L-arabinose (bacterial route): step 1/3. Its function is as follows. Catalyzes the conversion of L-arabinose to L-ribulose. This chain is L-arabinose isomerase, found in Bifidobacterium adolescentis (strain ATCC 15703 / DSM 20083 / NCTC 11814 / E194a).